The following is a 295-amino-acid chain: Origin of replication complex subunit 6 (295 aa).

The tract at residues 212–295 is disordered; it reads PSKRKHDDDS…MALEVSSAAN (84 aa). A compositionally biased stretch (acidic residues) spans 220 to 236; that stretch reads DSDSSGESSGDDQDELD. Residues 254 to 263 show a composition bias toward polar residues; the sequence is WKSSVLSNKQ.

This sequence belongs to the ORC6 family. As to quaternary structure, component of the origin recognition complex (ORC) composed of at least ORC1, ORC2, ORC3, ORC4, ORC5 and ORC6. ORC is regulated in a cell-cycle and development dependent manner. It is sequentially assembled at the exit from anaphase of mitosis and disassembled as cells enter S phase.

Its subcellular location is the nucleus. Functionally, component of the origin recognition complex (ORC) that binds origins of replication. DNA-binding is ATP-dependent. The specific DNA sequences that define origins of replication have not been identified yet. ORC is required to assemble the pre-replication complex necessary to initiate DNA replication. The protein is Origin of replication complex subunit 6 of Oryza sativa subsp. japonica (Rice).